The sequence spans 90 residues: RNA-binding protein Hfq (90 aa).

The Sm domain occupies 11–71; it reads DVFLNSVRKT…ISTIMPAAPV (61 aa).

The protein belongs to the Hfq family. As to quaternary structure, homohexamer.

In terms of biological role, RNA chaperone that binds small regulatory RNA (sRNAs) and mRNAs to facilitate mRNA translational regulation in response to envelope stress, environmental stress and changes in metabolite concentrations. Also binds with high specificity to tRNAs. In Maricaulis maris (strain MCS10) (Caulobacter maris), this protein is RNA-binding protein Hfq.